We begin with the raw amino-acid sequence, 167 residues long: Urease accessory protein UreE (167 aa).

The protein belongs to the UreE family.

It is found in the cytoplasm. Its function is as follows. Involved in urease metallocenter assembly. Binds nickel. Probably functions as a nickel donor during metallocenter assembly. The sequence is that of Urease accessory protein UreE from Pseudomonas paraeruginosa (strain DSM 24068 / PA7) (Pseudomonas aeruginosa (strain PA7)).